Reading from the N-terminus, the 89-residue chain is Large ribosomal subunit protein bL27 (89 aa).

The disordered stretch occupies residues 1-22; the sequence is MAHKKAGGSSRNGRDSESKRLG.

Belongs to the bacterial ribosomal protein bL27 family.

The protein is Large ribosomal subunit protein bL27 of Brucella abortus (strain S19).